The chain runs to 523 residues: Anthranilate synthase component 1 (523 aa).

L-tryptophan-binding positions include Ser45 and 296–298 (PYM). 333 to 334 (GT) serves as a coordination point for chorismate. Glu366 provides a ligand contact to Mg(2+). Residues Tyr454, Arg474, 488-490 (GAG), and Gly490 contribute to the chorismate site. Residue Glu503 participates in Mg(2+) binding.

Belongs to the anthranilate synthase component I family. In terms of assembly, heterotetramer consisting of two non-identical subunits: a beta subunit (TrpG) and a large alpha subunit (TrpE). It depends on Mg(2+) as a cofactor.

It catalyses the reaction chorismate + L-glutamine = anthranilate + pyruvate + L-glutamate + H(+). The protein operates within amino-acid biosynthesis; L-tryptophan biosynthesis; L-tryptophan from chorismate: step 1/5. Feedback inhibited by tryptophan. Functionally, part of a heterotetrameric complex that catalyzes the two-step biosynthesis of anthranilate, an intermediate in the biosynthesis of L-tryptophan. In the first step, the glutamine-binding beta subunit (TrpG) of anthranilate synthase (AS) provides the glutamine amidotransferase activity which generates ammonia as a substrate that, along with chorismate, is used in the second step, catalyzed by the large alpha subunit of AS (TrpE) to produce anthranilate. In the absence of TrpG, TrpE can synthesize anthranilate directly from chorismate and high concentrations of ammonia. This Vibrio cholerae serotype O1 (strain ATCC 39315 / El Tor Inaba N16961) protein is Anthranilate synthase component 1 (trpE).